The following is a 121-amino-acid chain: Small ribosomal subunit protein uS10 (121 aa).

Positions 1 to 20 (MTEQKAKSSKTSSEEAKKQK) are disordered.

This sequence belongs to the universal ribosomal protein uS10 family. In terms of assembly, part of the 30S ribosomal subunit.

Functionally, involved in the binding of tRNA to the ribosomes. This is Small ribosomal subunit protein uS10 from Mycoplasmoides gallisepticum (strain R(low / passage 15 / clone 2)) (Mycoplasma gallisepticum).